A 430-amino-acid chain; its full sequence is tRNA(Ile)-lysidine synthase (430 aa).

Ser27 to Ser32 is an ATP binding site.

It belongs to the tRNA(Ile)-lysidine synthase family.

It is found in the cytoplasm. The enzyme catalyses cytidine(34) in tRNA(Ile2) + L-lysine + ATP = lysidine(34) in tRNA(Ile2) + AMP + diphosphate + H(+). Ligates lysine onto the cytidine present at position 34 of the AUA codon-specific tRNA(Ile) that contains the anticodon CAU, in an ATP-dependent manner. Cytidine is converted to lysidine, thus changing the amino acid specificity of the tRNA from methionine to isoleucine. The polypeptide is tRNA(Ile)-lysidine synthase (Rickettsia felis (strain ATCC VR-1525 / URRWXCal2) (Rickettsia azadi)).